Consider the following 194-residue polypeptide: Peptide deformylase (194 aa).

The tract at residues D71 to V93 is disordered. Over residues E76 to V93 the composition is skewed to basic and acidic residues. Residues C119 and H161 each coordinate Fe cation. E162 is a catalytic residue. Residue H165 participates in Fe cation binding.

It belongs to the polypeptide deformylase family. The cofactor is Fe(2+).

It carries out the reaction N-terminal N-formyl-L-methionyl-[peptide] + H2O = N-terminal L-methionyl-[peptide] + formate. In terms of biological role, removes the formyl group from the N-terminal Met of newly synthesized proteins. Requires at least a dipeptide for an efficient rate of reaction. N-terminal L-methionine is a prerequisite for activity but the enzyme has broad specificity at other positions. This chain is Peptide deformylase, found in Erythrobacter litoralis (strain HTCC2594).